A 135-amino-acid polypeptide reads, in one-letter code: Basic phospholipase A2 KBf-VA (135 aa).

Intrachain disulfides connect Cys28/Cys87, Cys42/Cys134, Cys44/Cys60, Cys59/Cys115, Cys66/Cys108, Cys76/Cys101, and Cys94/Cys106. Positions 43, 45, and 47 each coordinate Ca(2+). His63 is a catalytic residue. Asp64 provides a ligand contact to Ca(2+). Asp109 is a catalytic residue.

This sequence belongs to the phospholipase A2 family. Group I subfamily. D49 sub-subfamily. Requires Ca(2+) as cofactor. Expressed by the venom gland.

It is found in the secreted. The enzyme catalyses a 1,2-diacyl-sn-glycero-3-phosphocholine + H2O = a 1-acyl-sn-glycero-3-phosphocholine + a fatty acid + H(+). Its function is as follows. Snake venom phospholipase A2 (PLA2) that inhibits neuromuscular transmission by blocking acetylcholine release from the nerve termini. PLA2 catalyzes the calcium-dependent hydrolysis of the 2-acyl groups in 3-sn-phosphoglycerides. The chain is Basic phospholipase A2 KBf-VA from Bungarus fasciatus (Banded krait).